Here is a 449-residue protein sequence, read N- to C-terminus: Glutamyl-tRNA reductase (449 aa).

Substrate is bound by residues 48–51, Ser-99, 104–106, and Gln-110; these read TCNR and EDQ. The active-site Nucleophile is the Cys-49. Residue 179–184 participates in NADP(+) binding; that stretch reads GAGEIG.

Belongs to the glutamyl-tRNA reductase family. In terms of assembly, homodimer.

The catalysed reaction is (S)-4-amino-5-oxopentanoate + tRNA(Glu) + NADP(+) = L-glutamyl-tRNA(Glu) + NADPH + H(+). Its pathway is porphyrin-containing compound metabolism; protoporphyrin-IX biosynthesis; 5-aminolevulinate from L-glutamyl-tRNA(Glu): step 1/2. In terms of biological role, catalyzes the NADPH-dependent reduction of glutamyl-tRNA(Glu) to glutamate 1-semialdehyde (GSA). This is Glutamyl-tRNA reductase from Methanosarcina barkeri (strain Fusaro / DSM 804).